The primary structure comprises 91 residues: Small ribosomal subunit protein bS16 (91 aa).

It belongs to the bacterial ribosomal protein bS16 family.

This chain is Small ribosomal subunit protein bS16, found in Phytoplasma australiense.